Consider the following 287-residue polypeptide: Urease accessory protein UreD (287 aa).

This sequence belongs to the UreD family. In terms of assembly, ureD, UreF and UreG form a complex that acts as a GTP-hydrolysis-dependent molecular chaperone, activating the urease apoprotein by helping to assemble the nickel containing metallocenter of UreC. The UreE protein probably delivers the nickel.

Its subcellular location is the cytoplasm. Functionally, required for maturation of urease via the functional incorporation of the urease nickel metallocenter. This chain is Urease accessory protein UreD, found in Ureaplasma parvum serovar 3 (strain ATCC 27815 / 27 / NCTC 11736).